The sequence spans 297 residues: Protoheme IX farnesyltransferase 1 (297 aa).

9 helical membrane passes run 23-43, 45-65, 93-113, 117-137, 145-165, 171-191, 216-236, 241-261, and 277-297; these read VVVL…RAGV, WSVL…AAVV, LPAL…LLVF, LTAW…TGFL, IVIG…AVSG, PLLL…ALAI, LHIL…YAIH, LYLV…WVLY, and IGYL…LLNL.

The protein belongs to the UbiA prenyltransferase family. Protoheme IX farnesyltransferase subfamily.

It is found in the cell inner membrane. It catalyses the reaction heme b + (2E,6E)-farnesyl diphosphate + H2O = Fe(II)-heme o + diphosphate. Its pathway is porphyrin-containing compound metabolism; heme O biosynthesis; heme O from protoheme: step 1/1. Functionally, converts heme B (protoheme IX) to heme O by substitution of the vinyl group on carbon 2 of heme B porphyrin ring with a hydroxyethyl farnesyl side group. In Pseudomonas putida (strain ATCC 47054 / DSM 6125 / CFBP 8728 / NCIMB 11950 / KT2440), this protein is Protoheme IX farnesyltransferase 1.